The chain runs to 333 residues: Electron transfer flavoprotein subunit alpha, mitochondrial (333 aa).

The N-terminal 19 residues, 1 to 19 (MFRAAAPGQLRRATSLLRF), are a transit peptide targeting the mitochondrion. A domain I region spans residues 20–204 (QSTLVIAEHA…GISEWLDQKL (185 aa)). N6-acetyllysine; alternate is present on lysine 59. N6-succinyllysine; alternate is present on lysine 59. Lysine 62 carries the N6-acetyllysine modification. An N6-acetyllysine; alternate modification is found at lysine 69. Lysine 69 is modified (N6-succinyllysine; alternate). N6-acetyllysine is present on lysine 75. N6-acetyllysine; alternate is present on lysine 85. An N6-succinyllysine; alternate modification is found at lysine 85. At threonine 93 the chain carries Phosphothreonine. 2 positions are modified to N6-acetyllysine: lysine 101 and lysine 139. Serine 140 is subject to Phosphoserine. An N6-acetyllysine; alternate modification is found at lysine 158. The residue at position 158 (lysine 158) is an N6-succinyllysine; alternate. Position 164 is an N6-acetyllysine (lysine 164). Residue lysine 187 is modified to N6-succinyllysine. Lysine 203 is modified (N6-acetyllysine; alternate). Lysine 203 carries the post-translational modification N6-succinyllysine; alternate. Residues 205-333 (TKSDRPELTG…PEMTELLKKK (129 aa)) form a domain II region. The residue at position 216 (lysine 216) is an N6-succinyllysine. Arginine 223 is an FAD binding site. N6-acetyllysine; alternate is present on residues lysine 226 and lysine 232. Lysine 226 and lysine 232 each carry N6-succinyllysine; alternate. FAD contacts are provided by residues serine 248, 263–266 (VGQT), 281–286 (SGAIQH), and asparagine 300. An N6-succinyllysine modification is found at lysine 301. 318 to 319 (DL) contacts FAD.

Belongs to the ETF alpha-subunit/FixB family. Heterodimer composed of ETFA and ETFB. Identified in a complex that contains ETFA, ETFB and ETFRF1. Interaction with ETFRF1 promotes dissociation of the bound FAD and loss of electron transfer activity. Interacts with TASOR. FAD is required as a cofactor.

It localises to the mitochondrion matrix. Heterodimeric electron transfer flavoprotein that accepts electrons from several mitochondrial dehydrogenases, including acyl-CoA dehydrogenases, glutaryl-CoA and sarcosine dehydrogenase. It transfers the electrons to the main mitochondrial respiratory chain via ETF-ubiquinone oxidoreductase (ETF dehydrogenase). Required for normal mitochondrial fatty acid oxidation and normal amino acid metabolism. In Bos taurus (Bovine), this protein is Electron transfer flavoprotein subunit alpha, mitochondrial (ETFA).